The following is a 261-amino-acid chain: MAHSDWGYDSPNGPZEWVKLYPIANGNNQSPIDIKTSETKHDTSLKPFSVSYDPATAKEIVNVGHSFQVKFEDSDNRSVLKDGPLPGSYRLVQFHFHWGSTDDYGSEHTVDGVKYSAELHLVHWNSSKYSSFDEASSQADGLAILGVLMKVGEANPKLQKVLDALNEVKTKGKKAPFKNFDPSSLLPSSPDYWTYSGSLTHPPLYESVTWIVCKENISISSQQLSQFRSLLSNVEGGKAVPIQHNNRPPQPLKGRTVRAFF.

Residue Ala2 is modified to N-acetylalanine. The region spanning 4–261 is the Alpha-carbonic anhydrase domain; the sequence is SDWGYDSPNG…LKGRTVRAFF (258 aa). His65 (proton donor/acceptor) is an active-site residue. Zn(2+) is bound by residues His95, His97, and His120. Residues Thr200 and 200–201 each bind substrate; that span reads TH.

The protein belongs to the alpha-carbonic anhydrase family. It depends on Zn(2+) as a cofactor.

The protein resides in the cytoplasm. The catalysed reaction is hydrogencarbonate + H(+) = CO2 + H2O. It carries out the reaction urea = cyanamide + H2O. Its activity is regulated as follows. Inhibited by acetazolamide. Functionally, catalyzes the reversible hydration of carbon dioxide. Can hydrate cyanamide to urea. In Equus caballus (Horse), this protein is Carbonic anhydrase 1 (CA1).